The primary structure comprises 233 residues: uncharacterized protein (233 aa).

This sequence belongs to the LutC/YkgG family.

This is an uncharacterized protein from Neisseria meningitidis serogroup B (strain ATCC BAA-335 / MC58).